The chain runs to 345 residues: Phosphoribosylformylglycinamidine cyclo-ligase (345 aa).

Belongs to the AIR synthase family.

The protein resides in the cytoplasm. The enzyme catalyses 2-formamido-N(1)-(5-O-phospho-beta-D-ribosyl)acetamidine + ATP = 5-amino-1-(5-phospho-beta-D-ribosyl)imidazole + ADP + phosphate + H(+). It functions in the pathway purine metabolism; IMP biosynthesis via de novo pathway; 5-amino-1-(5-phospho-D-ribosyl)imidazole from N(2)-formyl-N(1)-(5-phospho-D-ribosyl)glycinamide: step 2/2. The polypeptide is Phosphoribosylformylglycinamidine cyclo-ligase (Aeromonas salmonicida (strain A449)).